Here is a 709-residue protein sequence, read N- to C-terminus: Nucleobase-ascorbate transporter 12 (709 aa).

The disordered stretch occupies residues 1-145 (MSSSDPKPGP…GSGDPVRRPG (145 aa)). Residues 7 to 19 (KPGPKPGPWPPTP) are compositionally biased toward pro residues. Residue Ser40 is modified to Phosphoserine. The span at 41–53 (GETTATDSSSGQL) shows a compositional bias: polar residues. Basic and acidic residues-rich tracts occupy residues 89–98 (ETDKDKKEKP) and 113–122 (QPVKRRRDSD). 12 consecutive transmembrane segments (helical) span residues 190 to 210 (YLSM…AMGG), 218 to 238 (VVST…SFGS), 240 to 260 (LPLI…IINS), 283 to 303 (IIIG…SLIL), 308 to 328 (PVVV…YGFP), 329 to 349 (LVGK…IFAL), 361 to 381 (IFLI…AFLL), 438 to 458 (WGVP…SVIA), 530 to 550 (GACV…LASI), 551 to 571 (PQVM…ALGL), 585 to 605 (IIIV…FQQY), and 639 to 659 (YVMN…AVIL).

The protein belongs to the nucleobase:cation symporter-2 (NCS2) (TC 2.A.40) family. Ubiquitous.

It localises to the cell membrane. This chain is Nucleobase-ascorbate transporter 12 (NAT12), found in Arabidopsis thaliana (Mouse-ear cress).